A 155-amino-acid chain; its full sequence is MRLRLIAVGSRMPKWVEEGWHEYAKRLPQELSLELVEIPLNTRGKNADVARLIRQEGEAMLSKVQPGERIVTLEVHGKPWSTEQLATELDRWRLDSRTVNLMVGGPEGLAPEVCARAEQRWSLSPLTLPHPLVRILIGEQIYRAWTVLSGHPYHK.

Residues Leu-73, Gly-104, and 123–128 (LSPLTL) contribute to the S-adenosyl-L-methionine site.

The protein belongs to the RNA methyltransferase RlmH family. As to quaternary structure, homodimer.

The protein resides in the cytoplasm. The catalysed reaction is pseudouridine(1915) in 23S rRNA + S-adenosyl-L-methionine = N(3)-methylpseudouridine(1915) in 23S rRNA + S-adenosyl-L-homocysteine + H(+). Its function is as follows. Specifically methylates the pseudouridine at position 1915 (m3Psi1915) in 23S rRNA. The protein is Ribosomal RNA large subunit methyltransferase H of Pseudomonas putida (strain W619).